The primary structure comprises 218 residues: Ras-related protein Rab-11B (218 aa).

N-acetylglycine is present on Gly-2. GTP is bound by residues Ser-20, Gly-21, Gly-23, Lys-24, Ser-25, Asn-26, Asn-37, Leu-38, Ser-40, Ser-42, and Thr-43. Position 25 (Ser-25) interacts with Mg(2+). Positions 36 to 47 (FNLESKSTIGVE) match the Switch 1 motif. The Mg(2+) site is built by Thr-43 and Asp-66. Residues 67–86 (TAGQERYRAITSAYYRGAVG) carry the Switch 2 motif. Residues Gly-69, Asn-124, Lys-125, Asp-127, Ala-155, and Leu-156 each coordinate GTP. The interval 183-218 (DRSAHDESPGNNVVDISVPPTTDGQKSNKLQCCQNM) is disordered. Residues 201–218 (PPTTDGQKSNKLQCCQNM) show a composition bias toward polar residues. Residues Cys-214 and Cys-215 are each lipidated (S-geranylgeranyl cysteine). The residue at position 215 (Cys-215) is a Cysteine methyl ester. A propeptide spans 216-218 (QNM) (removed in mature form).

It belongs to the small GTPase superfamily. Rab family. Mg(2+) serves as cofactor.

The protein resides in the recycling endosome membrane. The protein localises to the cytoplasmic vesicle. It is found in the secretory vesicle. Its subcellular location is the synaptic vesicle membrane. It localises to the phagosome membrane. The catalysed reaction is GTP + H2O = GDP + phosphate + H(+). Regulated by guanine nucleotide exchange factors (GEFs) which promote the exchange of bound GDP for free GTP. Regulated by GTPase activating proteins (GAPs) which increase the GTP hydrolysis activity. Inhibited by GDP dissociation inhibitors (GDIs) which prevent Rab-GDP dissociation. Functionally, the small GTPases Rab are key regulators of intracellular membrane trafficking, from the formation of transport vesicles to their fusion with membranes. Rabs cycle between an inactive GDP-bound form and an active GTP-bound form that is able to recruit to membranes different set of downstream effectors directly responsible for vesicle formation, movement, tethering and fusion. That Rab plays a role in endocytic recycling, regulating apical recycling of several transmembrane proteins including cystic fibrosis transmembrane conductance regulator/CFTR, epithelial sodium channel/ENaC, potassium voltage-gated channel, and voltage-dependent L-type calcium channel. May also regulate constitutive and regulated secretion, like insulin granule exocytosis. Required for melanosome transport and release from melanocytes. Also regulates V-ATPase intracellular transport in response to extracellular acidosis. The sequence is that of Ras-related protein Rab-11B from Diplobatis ommata (Ocellated electric ray).